A 163-amino-acid chain; its full sequence is NADH-quinone oxidoreductase subunit I (163 aa).

4Fe-4S ferredoxin-type domains follow at residues 54–84 (LRRYPNGEERCIACKLCEAVCPALAITIDSA) and 94–123 (TRYDIDLFKCIFCGFCEESCPVDSIVETHI). Cys-64, Cys-67, Cys-70, Cys-74, Cys-103, Cys-106, Cys-109, and Cys-113 together coordinate [4Fe-4S] cluster.

Belongs to the complex I 23 kDa subunit family. As to quaternary structure, NDH-1 is composed of 14 different subunits. Subunits NuoA, H, J, K, L, M, N constitute the membrane sector of the complex. [4Fe-4S] cluster is required as a cofactor.

It is found in the cell inner membrane. It carries out the reaction a quinone + NADH + 5 H(+)(in) = a quinol + NAD(+) + 4 H(+)(out). Its function is as follows. NDH-1 shuttles electrons from NADH, via FMN and iron-sulfur (Fe-S) centers, to quinones in the respiratory chain. The immediate electron acceptor for the enzyme in this species is believed to be ubiquinone. Couples the redox reaction to proton translocation (for every two electrons transferred, four hydrogen ions are translocated across the cytoplasmic membrane), and thus conserves the redox energy in a proton gradient. The polypeptide is NADH-quinone oxidoreductase subunit I (Xylella fastidiosa (strain 9a5c)).